The sequence spans 517 residues: Sugar transport protein MST1 (517 aa).

Residues 1-25 (MAGGVIVANDGDGSAVDHGGRLTFS) lie on the Cytoplasmic side of the membrane. Residues 26–46 (VVITCLVAASGGLIFGYDVGI) traverse the membrane as a helical segment. Residues 47–83 (SGGVSTMEPFLRRFFPGVVRRMAEARPGNEYCVYDSQ) lie on the Extracellular side of the membrane. A helical membrane pass occupies residues 84–104 (ALTAFTSSLYVAGLVASLVAS). At 105-120 (RVTRAMGRQAVMVMGG) the chain is on the cytoplasmic side. Residues 121–141 (ALFFAGGAVTGFAVNIAMLIV) form a helical membrane-spanning segment. The Extracellular segment spans residues 142–143 (GR). Residues 144–164 (MLLGFGVGFTNQAAPLFLAEM) form a helical membrane-spanning segment. Residues 165 to 170 (APTRWR) are Cytoplasmic-facing. The helical transmembrane segment at 171–191 (GSLTAGFQFFLAVGVVIATVT) threads the bilayer. At 192–203 (NYFASRVPWGWR) the chain is on the extracellular side. The chain crosses the membrane as a helical span at residues 204–224 (LSLGLAGAPAVVIFLGALFLT). Topologically, residues 225–288 (DTPSSLVMRG…AARREYRPYL (64 aa)) are cytoplasmic. The chain crosses the membrane as a helical span at residues 289-309 (VFAVAMPMFFQLTGVIVISFF). Residues 310-325 (SPLVFRTVGFGSNAAL) lie on the Extracellular side of the membrane. Residues 326-346 (MGNVILGAVNLVCLMLSTLVI) form a helical membrane-spanning segment. The Cytoplasmic portion of the chain corresponds to 347-352 (DRYGRK). A helical transmembrane segment spans residues 353-373 (VLFMVGGAIMIIAQVGVAWIM). Residues 374–389 (GAQVGKNGSEAMARPY) are Extracellular-facing. A helical transmembrane segment spans residues 390–410 (AVAVVAFTCLHTAGFGWSWGP). The Cytoplasmic segment spans residues 411-430 (LGWVIPGEIFPVDIRSAGQA). Residues 431–451 (MNVSIGLGLTFVQTQSFLAML) form a helical membrane-spanning segment. Residues 452 to 456 (CRFRY) are Extracellular-facing. A helical membrane pass occupies residues 457–477 (GTFAYYAAWVAVMTVFIAVFL). Topologically, residues 478-517 (PETKGVPLESMATVWARHWYWKRFAREQPKTSADEPTGTY) are cytoplasmic.

This sequence belongs to the major facilitator superfamily. Sugar transporter (TC 2.A.1.1) family.

Its subcellular location is the membrane. In terms of biological role, mediates active uptake of hexoses by sugar:proton symport. The sequence is that of Sugar transport protein MST1 from Oryza sativa subsp. japonica (Rice).